A 154-amino-acid polypeptide reads, in one-letter code: 6,7-dimethyl-8-ribityllumazine synthase (154 aa).

Residues F23, 57–59 (AFE), and 81–83 (AVI) contribute to the 5-amino-6-(D-ribitylamino)uracil site. 86-87 (ST) contributes to the (2S)-2-hydroxy-3-oxobutyl phosphate binding site. H89 functions as the Proton donor in the catalytic mechanism. 5-amino-6-(D-ribitylamino)uracil is bound at residue F114. R128 contributes to the (2S)-2-hydroxy-3-oxobutyl phosphate binding site.

The protein belongs to the DMRL synthase family.

The enzyme catalyses (2S)-2-hydroxy-3-oxobutyl phosphate + 5-amino-6-(D-ribitylamino)uracil = 6,7-dimethyl-8-(1-D-ribityl)lumazine + phosphate + 2 H2O + H(+). It participates in cofactor biosynthesis; riboflavin biosynthesis; riboflavin from 2-hydroxy-3-oxobutyl phosphate and 5-amino-6-(D-ribitylamino)uracil: step 1/2. In terms of biological role, catalyzes the formation of 6,7-dimethyl-8-ribityllumazine by condensation of 5-amino-6-(D-ribitylamino)uracil with 3,4-dihydroxy-2-butanone 4-phosphate. This is the penultimate step in the biosynthesis of riboflavin. The chain is 6,7-dimethyl-8-ribityllumazine synthase from Campylobacter jejuni subsp. jejuni serotype O:2 (strain ATCC 700819 / NCTC 11168).